Consider the following 298-residue polypeptide: Small ribosomal subunit protein uS2 (298 aa).

The disordered stretch occupies residues 240-298 (AGENWDTQAPGAGVPGSAFAAASAAAATSWEADGGDWAASSAPPAGESWAETQPTEAKW). A compositionally biased stretch (low complexity) spans 248–271 (APGAGVPGSAFAAASAAAATSWEA). The span at 289–298 (AETQPTEAKW) shows a compositional bias: polar residues.

The protein belongs to the universal ribosomal protein uS2 family. Component of the small ribosomal subunit. Mature ribosomes consist of a small (40S) and a large (60S) subunit. The 40S subunit contains about 33 different proteins and 1 molecule of RNA (18S). The 60S subunit contains about 49 different proteins and 3 molecules of RNA (25S, 5.8S and 5S). Interacts with rps21.

It is found in the cytoplasm. Required for the assembly and/or stability of the 40S ribosomal subunit. Required for the processing of the 20S rRNA-precursor to mature 18S rRNA in a late step of the maturation of 40S ribosomal subunits. The protein is Small ribosomal subunit protein uS2 (rps0) of Aspergillus clavatus (strain ATCC 1007 / CBS 513.65 / DSM 816 / NCTC 3887 / NRRL 1 / QM 1276 / 107).